Reading from the N-terminus, the 648-residue chain is Threonine--tRNA ligase (648 aa).

A TGS domain is found at 1-61 (MIDIILPDGS…INTATVKAIT (61 aa)). The catalytic stretch occupies residues 243 to 549 (DHRKLGRELE…LIEHYSGKLP (307 aa)). Zn(2+) is bound by residues C349, H400, and H526.

This sequence belongs to the class-II aminoacyl-tRNA synthetase family. Homodimer. Zn(2+) serves as cofactor.

It is found in the cytoplasm. The enzyme catalyses tRNA(Thr) + L-threonine + ATP = L-threonyl-tRNA(Thr) + AMP + diphosphate + H(+). Its function is as follows. Catalyzes the attachment of threonine to tRNA(Thr) in a two-step reaction: L-threonine is first activated by ATP to form Thr-AMP and then transferred to the acceptor end of tRNA(Thr). Also edits incorrectly charged L-seryl-tRNA(Thr). The protein is Threonine--tRNA ligase of Orientia tsutsugamushi (strain Ikeda) (Rickettsia tsutsugamushi).